A 317-amino-acid chain; its full sequence is Phospho-N-acetylmuramoyl-pentapeptide-transferase (317 aa).

9 helical membrane-spanning segments follow: residues 6–26, 52–72, 78–98, 114–134, 145–165, 171–191, 194–214, 223–244, and 297–317; these read IVMAIVISFIVASILGPIIIP, PTIGGLIFIFATIITMFIMVG, AMIALYSFVGFGFVGFLDDLL, MILLLIVSGFLTWYAYKYIGT, INFGLFYIPFVMFYFAGVTNA, GLDGLATSVTVLVTTFLGIIS, LGHISLAIFCVALAGALLAFL, VFMGDTGSLALGGAVAMVALIL, and KIVSVFSIITVVFCFIAFASL.

The protein belongs to the glycosyltransferase 4 family. MraY subfamily. Mg(2+) serves as cofactor.

The protein resides in the cell membrane. It catalyses the reaction UDP-N-acetyl-alpha-D-muramoyl-L-alanyl-gamma-D-glutamyl-meso-2,6-diaminopimeloyl-D-alanyl-D-alanine + di-trans,octa-cis-undecaprenyl phosphate = di-trans,octa-cis-undecaprenyl diphospho-N-acetyl-alpha-D-muramoyl-L-alanyl-D-glutamyl-meso-2,6-diaminopimeloyl-D-alanyl-D-alanine + UMP. Its pathway is cell wall biogenesis; peptidoglycan biosynthesis. Its function is as follows. Catalyzes the initial step of the lipid cycle reactions in the biosynthesis of the cell wall peptidoglycan: transfers peptidoglycan precursor phospho-MurNAc-pentapeptide from UDP-MurNAc-pentapeptide onto the lipid carrier undecaprenyl phosphate, yielding undecaprenyl-pyrophosphoryl-MurNAc-pentapeptide, known as lipid I. In Clostridium perfringens (strain 13 / Type A), this protein is Phospho-N-acetylmuramoyl-pentapeptide-transferase.